We begin with the raw amino-acid sequence, 634 residues long: Kelch-like protein 31 (634 aa).

The residue at position 2 (A2) is a N,N,N-trimethylalanine. One can recognise a BTB domain in the interval 73 to 137; the sequence is CDLVIGTKTK…AYTGKLTLSL (65 aa). A BACK domain is found at 172–273; the sequence is CMYVVNIAET…SAQDLVNYVQ (102 aa). Kelch repeat units lie at residues 317–365, 366–419, 420–466, 468–513, 515–565, and 567–614; these read VLVT…VMDG, FLYV…VFNG, LVYA…VADG, VLVT…TLSD, VYVM…ALHG, and AYLV…TLSM.

Post-translationally, N-terminus is methylated by METTL11A/NTM1. Strongly expressed in skeletal muscle and weakly in heart. According to PubMed:15302408, not expressed in other tissues. According to PubMed:18719355, abundantly expressed in both embryonic skeletal and heart tissues.

Transcriptional repressor in MAPK/JNK signaling pathway to regulate cellular functions. Overexpression inhibits the transcriptional activities of both the TPA-response element (TRE) and serum response element (SRE). The protein is Kelch-like protein 31 (KLHL31) of Homo sapiens (Human).